A 207-amino-acid chain; its full sequence is uncharacterized protein (207 aa).

This is an uncharacterized protein from Methanocaldococcus jannaschii (strain ATCC 43067 / DSM 2661 / JAL-1 / JCM 10045 / NBRC 100440) (Methanococcus jannaschii).